A 256-amino-acid polypeptide reads, in one-letter code: uncharacterized protein (256 aa).

The N-terminal stretch at 1 to 24 (MIKRVNKLVIGISLLFLVISITAG) is a signal peptide. Cys-25 carries the N-palmitoyl cysteine lipid modification. Cys-25 carries the S-diacylglycerol cysteine lipid modification.

The protein belongs to the staphylococcal tandem lipoprotein family.

It localises to the cell membrane. This is an uncharacterized protein from Staphylococcus aureus (strain bovine RF122 / ET3-1).